Here is a 37-residue protein sequence, read N- to C-terminus: Large ribosomal subunit protein bL36 (37 aa).

This sequence belongs to the bacterial ribosomal protein bL36 family.

The sequence is that of Large ribosomal subunit protein bL36 from Aliivibrio fischeri (strain ATCC 700601 / ES114) (Vibrio fischeri).